Reading from the N-terminus, the 100-residue chain is Mitochondrial zinc maintenance protein 1, mitochondrial (100 aa).

Belongs to the complex I LYR family. MZM1 subfamily. As to quaternary structure, interacts with RIP1.

It localises to the mitochondrion matrix. In terms of biological role, assembly factor required for Rieske Fe-S protein RIP1 incorporation into the cytochrome b-c1 (CIII) complex. Functions as a chaperone, binding to this subunit within the mitochondrial matrix and stabilizing it prior to its translocation and insertion into the late CIII dimeric intermediate within the mitochondrial inner membrane. Modulates the mitochondrial matrix zinc pool. This Schizosaccharomyces pombe (strain 972 / ATCC 24843) (Fission yeast) protein is Mitochondrial zinc maintenance protein 1, mitochondrial (new18).